The primary structure comprises 1453 residues: Leucine-rich repeat-containing protein 9 (1453 aa).

7 LRR repeats span residues 53 to 78 (FPNL…CLQL), 97 to 119 (CRNL…LEKL), 120 to 141 (IKLK…LQTL), 142 to 164 (KNLK…LDSN), 166 to 188 (QLER…NLTR), 224 to 248 (LQRF…AMKK), and 264 to 287 (KEDL…RVKL). The segment at 302 to 321 (LKGSGKGHSDGSNNSKVTDP) is disordered. LRR repeat units follow at residues 344–367 (LNAL…IYHI), 671–693 (KARP…TSVY), 694–715 (SHIV…LSKL), 716–737 (TGLR…VYHL), 739–758 (NLEY…GFRG), 759–784 (LMKL…MLCK), 786–812 (TTSL…VIGR), 886–908 (YLKI…LEKL), 909–930 (ENLK…LESC), 931–952 (INLE…ISKM), 953–975 (TKLT…TFDN), 976–1001 (MLHL…SFTL), 1023–1048 (LCNL…LFVI), 1092–1115 (FKQM…PVDQ), 1116–1138 (FRNV…LIYL), 1139–1161 (PNVK…LKPQ), 1201–1224 (MHSL…QLNR), 1225–1247 (LRNL…LDNL), 1248–1270 (VVLQ…AFAK), 1272–1292 (SSLL…KLQS), 1293–1317 (LVKL…KLDV), 1319–1345 (STLR…IFRL), and 1365–1388 (EFHL…PMDG).

In Homo sapiens (Human), this protein is Leucine-rich repeat-containing protein 9 (LRRC9).